A 766-amino-acid polypeptide reads, in one-letter code: Nucleolar complex protein 2 (766 aa).

Residues 1-12 (MKLATKKIKTLG) are compositionally biased toward basic residues. Disordered stretches follow at residues 1–73 (MKLA…EELE), 100–154 (DTDD…DEED), and 674–766 (KTGV…LNEW). Basic and acidic residues predominate over residues 14 to 29 (SKPDLSKKKPAKDAIR). The span at 33–42 (PQTTSETKVT) shows a compositional bias: polar residues. Over residues 58–67 (KTTKKGFKKS) the composition is skewed to basic residues. Residues 100–115 (DTDDDDDEEGDEEDKE) are compositionally biased toward acidic residues. Threonine 101 carries the post-translational modification Phosphothreonine. Positions 130–140 (EKYHKPSKDLE) are enriched in basic and acidic residues. Residues 141-154 (VASDESDFEVDEED) are compositionally biased toward acidic residues. Phosphoserine is present on residues serine 143, serine 146, serine 691, serine 693, and serine 705. Residues 706 to 720 (DDDDDEDVQEEEEVE) show a composition bias toward acidic residues. A compositionally biased stretch (basic and acidic residues) spans 757–766 (IVKDLDLNEW).

It belongs to the NOC2 family.

Its subcellular location is the nucleus. The sequence is that of Nucleolar complex protein 2 from Drosophila melanogaster (Fruit fly).